Here is a 325-residue protein sequence, read N- to C-terminus: GTPase Era (325 aa).

Positions 30 to 198 constitute an Era-type G domain; the sequence is HCGFVAIVGR…KKHVRDHLPK (169 aa). The interval 38–45 is G1; it reads GRPNVGKS. Residue 38 to 45 participates in GTP binding; it reads GRPNVGKS. The tract at residues 64–68 is G2; the sequence is QTTRH. Residues 85 to 88 form a G3 region; sequence DTPG. GTP is bound by residues 85–89 and 147–150; these read DTPGL and NKVD. Positions 147–150 are G4; that stretch reads NKVD. Residues 177-179 form a G5 region; that stretch reads ISA. The KH type-2 domain occupies 221–307; the sequence is VREKLMRFTG…YLETWVKVKS (87 aa).

This sequence belongs to the TRAFAC class TrmE-Era-EngA-EngB-Septin-like GTPase superfamily. Era GTPase family. As to quaternary structure, monomer.

It is found in the cytoplasm. The protein localises to the cell inner membrane. Functionally, an essential GTPase that binds both GDP and GTP, with rapid nucleotide exchange. Plays a role in 16S rRNA processing and 30S ribosomal subunit biogenesis and possibly also in cell cycle regulation and energy metabolism. The polypeptide is GTPase Era (Vibrio cholerae serotype O1 (strain ATCC 39315 / El Tor Inaba N16961)).